The sequence spans 150 residues: Ribonuclease K6 (150 aa).

The N-terminal stretch at Met-1–Ala-23 is a signal peptide. Residue His-38 is the Proton acceptor of the active site. 4 disulfide bridges follow: Cys-46–Cys-104, Cys-60–Cys-114, Cys-78–Cys-129, and Cys-85–Cys-92. Substrate-binding positions include Lys-61 to Thr-65 and Lys-86. An N-linked (GlcNAc...) asparagine glycan is attached at Asn-100. Arg-105 is a binding site for substrate. The active-site Proton donor is the His-145.

The protein belongs to the pancreatic ribonuclease family. Interacts (via N-terminus) with bacterial lipopolysaccharide (LPS).

It localises to the secreted. It is found in the lysosome. The protein resides in the cytoplasmic granule. Ribonuclease which shows a preference for the pyrimidines uridine and cytosine. Has potent antibacterial activity against a range of Gram-positive and Gram-negative bacteria, including P.aeruginosa, A.baumanii, M.luteus, S.aureus, E.faecalis, E.faecium, S.saprophyticus and E.coli. Causes loss of bacterial membrane integrity, and also promotes agglutination of Gram-negative bacteria. Probably contributes to urinary tract sterility. Bactericidal activity is independent of RNase activity. The protein is Ribonuclease K6 (RNASE6) of Pan troglodytes (Chimpanzee).